Consider the following 129-residue polypeptide: uncharacterized protein (129 aa).

Transmembrane regions (helical) follow at residues 4 to 24 (FKFL…ILII) and 37 to 57 (VISL…DLSI).

It to B.burgdorferi BBF20.

It is found in the cell membrane. This is an uncharacterized protein from Borreliella burgdorferi (strain ATCC 35210 / DSM 4680 / CIP 102532 / B31) (Borrelia burgdorferi).